The primary structure comprises 287 residues: Ribosomal RNA small subunit methyltransferase I (287 aa).

It belongs to the methyltransferase superfamily. RsmI family.

Its subcellular location is the cytoplasm. The enzyme catalyses cytidine(1402) in 16S rRNA + S-adenosyl-L-methionine = 2'-O-methylcytidine(1402) in 16S rRNA + S-adenosyl-L-homocysteine + H(+). Catalyzes the 2'-O-methylation of the ribose of cytidine 1402 (C1402) in 16S rRNA. In Streptococcus pyogenes serotype M1, this protein is Ribosomal RNA small subunit methyltransferase I.